The sequence spans 660 residues: Translation factor GUF1, mitochondrial (660 aa).

The transit peptide at 1–42 directs the protein to the mitochondrion; sequence MRSCVRTASSVLQSWRAHTVLRNGCPLPSRTLERLPRLARSY. Residues 62 to 242 form the tr-type G domain; it reads ERYRNFCIVA…AVVEKIPAPV (181 aa). Residues 71–78, 135–139, and 189–192 each bind GTP; these read AHVDHGKS, DTPGH, and NKVD.

It belongs to the TRAFAC class translation factor GTPase superfamily. Classic translation factor GTPase family. LepA subfamily.

The protein resides in the mitochondrion inner membrane. It carries out the reaction GTP + H2O = GDP + phosphate + H(+). Its function is as follows. Promotes mitochondrial protein synthesis. May act as a fidelity factor of the translation reaction, by catalyzing a one-codon backward translocation of tRNAs on improperly translocated ribosomes. Binds to mitochondrial ribosomes in a GTP-dependent manner. In Phaeosphaeria nodorum (strain SN15 / ATCC MYA-4574 / FGSC 10173) (Glume blotch fungus), this protein is Translation factor GUF1, mitochondrial.